Consider the following 445-residue polypeptide: MKLFGTDGVRGKAGEFLDSFLAMRLAMAAGIYFKDKSITNNILVGKDTRRSGYMIENAIVSGLTSIGYNVIQIGPMPTPAIAFLTEDMRCDAGIMISASHNPYYDNGIKFFDAHGNKLSEDIEKKIEEIYFDDKLIQASKVDMEKIGQAKRIDDVIGRYIVSIKNSFPKDLTLKSLRVVLDVAHGAAYKVAPTVFKELGAEVIVMSDKPNGLNINENCGALHPANLAAEVKRLRADVGFAFDGDADRLVVVDEKGEVANGDSLLGVLALYLKEQGKLQSSVVATIMSNGALKEFLNKHGIELDTCNVGDKYVLEKLKANGGNFGGEQSGHIIFSDYAKTGDGLIAALQFSALMLSKKKSASSILGQVKPYPQLLTNLKIAEKKDLDKIKGLKELKKDLENKNINTLFRYSGTENLIRLLLEARDIKLLEKEMKNVVEFFKKALNG.

Ser-99 (phosphoserine intermediate) is an active-site residue. Ser-99, Asp-242, Asp-244, and Asp-246 together coordinate Mg(2+). A Phosphoserine modification is found at Ser-99.

Belongs to the phosphohexose mutase family. Mg(2+) serves as cofactor. Post-translationally, activated by phosphorylation.

The enzyme catalyses alpha-D-glucosamine 1-phosphate = D-glucosamine 6-phosphate. Catalyzes the conversion of glucosamine-6-phosphate to glucosamine-1-phosphate. The chain is Phosphoglucosamine mutase from Campylobacter jejuni subsp. jejuni serotype O:2 (strain ATCC 700819 / NCTC 11168).